Consider the following 55-residue polypeptide: MAKGVREKIKLVSSAGTGHFYTTTKNKRTKPEKLELKKFDPVVRQHVIYKEAKIK.

This sequence belongs to the bacterial ribosomal protein bL33 family.

The polypeptide is Large ribosomal subunit protein bL33 (Yersinia enterocolitica serotype O:8 / biotype 1B (strain NCTC 13174 / 8081)).